The primary structure comprises 165 residues: Large ribosomal subunit protein uL10 (165 aa).

It belongs to the universal ribosomal protein uL10 family. Part of the ribosomal stalk of the 50S ribosomal subunit. The N-terminus interacts with L11 and the large rRNA to form the base of the stalk. The C-terminus forms an elongated spine to which L12 dimers bind in a sequential fashion forming a multimeric L10(L12)X complex.

Forms part of the ribosomal stalk, playing a central role in the interaction of the ribosome with GTP-bound translation factors. This chain is Large ribosomal subunit protein uL10, found in Burkholderia mallei (strain NCTC 10229).